Here is a 686-residue protein sequence, read N- to C-terminus: Band 4.1-like protein 4A (686 aa).

Residues 11-299 (FYCEVLLLDE…EHHTFFRMPE (289 aa)) enclose the FERM domain. Residue S304 is modified to Phosphoserine. Positions 331–686 (RDLSIQLPRP…IQASRLKTET (356 aa)) are disordered. Over residues 357-376 (AQTQPAESNSISRITANMEN) the composition is skewed to polar residues. Phosphoserine occurs at positions 389, 393, and 402. A compositionally biased stretch (polar residues) spans 418–428 (GPQSGLYNSPS). The span at 479–489 (RCNTSSGSESE) shows a compositional bias: low complexity. Composition is skewed to basic and acidic residues over residues 518–527 (VLRRQKEKNQ) and 547–561 (QAKE…KELV). A compositionally biased stretch (basic residues) spans 588-601 (IRHSHSPRSYRQYR). Positions 648–658 (GSKDSLMEEKP) are enriched in basic and acidic residues. Positions 673-686 (TIKTIQASRLKTET) are enriched in polar residues.

Expressed in many tissues. High levels of expression in brain, liver, thymus and peripheral blood leukocytes and low levels of expression in heart, kidney, testis and colon.

It is found in the cytoplasm. Its subcellular location is the cytoskeleton. The sequence is that of Band 4.1-like protein 4A from Homo sapiens (Human).